The chain runs to 131 residues: Small ribosomal subunit protein uS8 (131 aa).

The protein belongs to the universal ribosomal protein uS8 family. In terms of assembly, part of the 30S ribosomal subunit. Contacts proteins S5 and S12.

Its function is as follows. One of the primary rRNA binding proteins, it binds directly to 16S rRNA central domain where it helps coordinate assembly of the platform of the 30S subunit. This is Small ribosomal subunit protein uS8 from Helicobacter pylori (strain P12).